The primary structure comprises 294 residues: Ribosomal RNA small subunit methyltransferase A (294 aa).

Residues asparagine 29, valine 31, glycine 56, glutamate 77, aspartate 107, and asparagine 126 each contribute to the S-adenosyl-L-methionine site.

Belongs to the class I-like SAM-binding methyltransferase superfamily. rRNA adenine N(6)-methyltransferase family. RsmA subfamily.

The protein resides in the cytoplasm. The enzyme catalyses adenosine(1518)/adenosine(1519) in 16S rRNA + 4 S-adenosyl-L-methionine = N(6)-dimethyladenosine(1518)/N(6)-dimethyladenosine(1519) in 16S rRNA + 4 S-adenosyl-L-homocysteine + 4 H(+). Functionally, specifically dimethylates two adjacent adenosines (A1518 and A1519) in the loop of a conserved hairpin near the 3'-end of 16S rRNA in the 30S particle. May play a critical role in biogenesis of 30S subunits. In Mycobacterium sp. (strain JLS), this protein is Ribosomal RNA small subunit methyltransferase A.